We begin with the raw amino-acid sequence, 135 residues long: MVVRIRLSRFGCKNRPFFRVMAADSRSPRDGKHLEVLGYFNPLPGQDGGKRMGLKFDRIKYWLSVGAQPSDPVQRLLFRSGLLPPPPMVAMGRKGGARDTRPVDPMTGRYVDAENKTVNANDNQPKEEDTEAKSA.

The transit peptide at 1 to 7 (MVVRIRL) directs the protein to the chloroplast and mitochondrion. A disordered region spans residues 87–135 (PMVAMGRKGGARDTRPVDPMTGRYVDAENKTVNANDNQPKEEDTEAKSA). Basic and acidic residues predominate over residues 124–135 (QPKEEDTEAKSA).

This sequence belongs to the bacterial ribosomal protein bS16 family. Component of the mitochondrial ribosome small subunit. As to expression, expressed at low levels in flowers, and, to a lower extent, in leaves, stems and roots.

It is found in the mitochondrion. The protein localises to the plastid. Its subcellular location is the chloroplast. This chain is Small ribosomal subunit protein bS16m/bS16c, found in Arabidopsis thaliana (Mouse-ear cress).